The following is a 103-amino-acid chain: MGKLTLLLLALLVWLQYSLWFGKNGIHDYSRVNDDVVAQQATNAKLKARNDQLFAEIDDLNGGQEAIEERARNELSMTKPGETFYRLVPDASKRAATAGQTHR.

Topologically, residues 1–3 (MGK) are cytoplasmic. A helical transmembrane segment spans residues 4–21 (LTLLLLALLVWLQYSLWF). The Periplasmic portion of the chain corresponds to 22 to 103 (GKNGIHDYSR…RAATAGQTHR (82 aa)). The stretch at 33–62 (NDDVVAQQATNAKLKARNDQLFAEIDDLNG) forms a coiled coil.

It belongs to the FtsB family. Part of a complex composed of FtsB, FtsL and FtsQ.

The protein localises to the cell inner membrane. In terms of biological role, essential cell division protein. May link together the upstream cell division proteins, which are predominantly cytoplasmic, with the downstream cell division proteins, which are predominantly periplasmic. This is Cell division protein FtsB from Salmonella agona (strain SL483).